The chain runs to 337 residues: Eukaryotic translation initiation factor 3 subunit H (337 aa).

The region spanning 21 to 153 is the MPN domain; sequence VQCDGLAVMK…LKAYRLTPQA (133 aa).

The protein belongs to the eIF-3 subunit H family. In terms of assembly, component of the eukaryotic translation initiation factor 3 (eIF-3) complex. The eIF-3 complex interacts with pix. Interacts with mxt.

Its subcellular location is the cytoplasm. Component of the eukaryotic translation initiation factor 3 (eIF-3) complex, which is involved in protein synthesis of a specialized repertoire of mRNAs and, together with other initiation factors, stimulates binding of mRNA and methionyl-tRNAi to the 40S ribosome. The eIF-3 complex specifically targets and initiates translation of a subset of mRNAs involved in cell proliferation. This is Eukaryotic translation initiation factor 3 subunit H from Drosophila ananassae (Fruit fly).